Consider the following 136-residue polypeptide: uncharacterized protein (136 aa).

The segment at 74–97 (RADPGRKGRTQPLPTQGSARRFLH) is disordered.

This is an uncharacterized protein from Saccharomyces cerevisiae (strain ATCC 204508 / S288c) (Baker's yeast).